A 178-amino-acid polypeptide reads, in one-letter code: Orotate phosphoribosyltransferase (178 aa).

Residues Arg-92, Lys-93, Lys-96, and 118–126 contribute to the 5-phospho-alpha-D-ribose 1-diphosphate site; that span reads EDVITTGSS. Residues Thr-122 and Arg-150 each contribute to the orotate site.

It belongs to the purine/pyrimidine phosphoribosyltransferase family. PyrE subfamily. As to quaternary structure, homodimer. Mg(2+) serves as cofactor.

The enzyme catalyses orotidine 5'-phosphate + diphosphate = orotate + 5-phospho-alpha-D-ribose 1-diphosphate. Its pathway is pyrimidine metabolism; UMP biosynthesis via de novo pathway; UMP from orotate: step 1/2. Catalyzes the transfer of a ribosyl phosphate group from 5-phosphoribose 1-diphosphate to orotate, leading to the formation of orotidine monophosphate (OMP). This Archaeoglobus fulgidus (strain ATCC 49558 / DSM 4304 / JCM 9628 / NBRC 100126 / VC-16) protein is Orotate phosphoribosyltransferase.